A 157-amino-acid chain; its full sequence is Protein-export protein SecB (157 aa).

Belongs to the SecB family. Homotetramer, a dimer of dimers. One homotetramer interacts with 1 SecA dimer.

The protein localises to the cytoplasm. Its function is as follows. One of the proteins required for the normal export of preproteins out of the cell cytoplasm. It is a molecular chaperone that binds to a subset of precursor proteins, maintaining them in a translocation-competent state. It also specifically binds to its receptor SecA. This chain is Protein-export protein SecB, found in Methylobacillus flagellatus (strain ATCC 51484 / DSM 6875 / VKM B-1610 / KT).